The chain runs to 39 residues: Cytochrome b559 subunit beta (39 aa).

Residues 14–30 (WLAVHGLAIPTVFFLGS) form a helical membrane-spanning segment. Residue His18 coordinates heme.

This sequence belongs to the PsbE/PsbF family. As to quaternary structure, heterodimer of an alpha subunit and a beta subunit. PSII is composed of 1 copy each of membrane proteins PsbA, PsbB, PsbC, PsbD, PsbE, PsbF, PsbH, PsbI, PsbJ, PsbK, PsbL, PsbM, PsbT, PsbX, PsbY, PsbZ, Psb30/Ycf12, at least 3 peripheral proteins of the oxygen-evolving complex and a large number of cofactors. It forms dimeric complexes. Heme b is required as a cofactor.

The protein localises to the plastid membrane. This b-type cytochrome is tightly associated with the reaction center of photosystem II (PSII). PSII is a light-driven water:plastoquinone oxidoreductase that uses light energy to abstract electrons from H(2)O, generating O(2) and a proton gradient subsequently used for ATP formation. It consists of a core antenna complex that captures photons, and an electron transfer chain that converts photonic excitation into a charge separation. The protein is Cytochrome b559 subunit beta of Cuscuta gronovii (Common dodder).